Consider the following 155-residue polypeptide: Small ribosomal subunit protein uS7c (155 aa).

The protein belongs to the universal ribosomal protein uS7 family. As to quaternary structure, part of the 30S ribosomal subunit.

It localises to the plastid. Its subcellular location is the chloroplast. In terms of biological role, one of the primary rRNA binding proteins, it binds directly to 16S rRNA where it nucleates assembly of the head domain of the 30S subunit. This Staurastrum punctulatum (Green alga) protein is Small ribosomal subunit protein uS7c (rps7).